The chain runs to 91 residues: Uteroglobin (91 aa).

Residues 1-21 form the signal peptide; sequence MKLTITLALVTLALLCSPASA.

Belongs to the secretoglobin family. As to quaternary structure, antiparallel homodimer; disulfide-linked. Interaction with LMBR1L is controversial.

It is found in the secreted. Its function is as follows. Uteroglobin binds progesterone specifically and with high affinity. It may regulate progesterone concentrations reaching the blastocyst. It is also a potent inhibitor of phospholipase A2. The chain is Uteroglobin (SCGB1A1) from Lepus capensis (Brown hare).